We begin with the raw amino-acid sequence, 338 residues long: Glyceraldehyde-3-phosphate dehydrogenase (338 aa).

NAD(+) is bound by residues 12–13, D34, and R79; that span reads RI. D-glyceraldehyde 3-phosphate contacts are provided by residues 150 to 152, T181, 210 to 211, and R233; these read SCT and TG. C151 acts as the Nucleophile in catalysis. N315 is an NAD(+) binding site.

This sequence belongs to the glyceraldehyde-3-phosphate dehydrogenase family. As to quaternary structure, homotetramer.

It is found in the cytoplasm. The enzyme catalyses D-glyceraldehyde 3-phosphate + phosphate + NAD(+) = (2R)-3-phospho-glyceroyl phosphate + NADH + H(+). It functions in the pathway carbohydrate degradation; glycolysis; pyruvate from D-glyceraldehyde 3-phosphate: step 1/5. The polypeptide is Glyceraldehyde-3-phosphate dehydrogenase (GPD) (Sordaria macrospora).